The chain runs to 223 residues: MLLVVGLGNPGKEYAAHRHNVGFMAIDALADEVRADPFREKFSGVHARAEIAGQQAILLKPMTYMNESGRSVQPAMAFFKVAPSELIVLHDELDLPFGTVRLKVGGGHAGHNGLRSIISHGGTGNFGRVRLGVGRPPAGFRGEVADYVLSGFDAVERASLPDCLKQAVQSVLEVAARGFEAAMNVRNTRPKPGKRQKGEGDGSTDPAPAAKEGKGPLPPTQKP.

Position 14 (Tyr14) interacts with tRNA. The Proton acceptor role is filled by His19. TRNA is bound by residues Tyr64, Asn66, and Asn112. Residues 183 to 223 (MNVRNTRPKPGKRQKGEGDGSTDPAPAAKEGKGPLPPTQKP) are disordered.

Belongs to the PTH family. Monomer.

It localises to the cytoplasm. The catalysed reaction is an N-acyl-L-alpha-aminoacyl-tRNA + H2O = an N-acyl-L-amino acid + a tRNA + H(+). Functionally, hydrolyzes ribosome-free peptidyl-tRNAs (with 1 or more amino acids incorporated), which drop off the ribosome during protein synthesis, or as a result of ribosome stalling. Its function is as follows. Catalyzes the release of premature peptidyl moieties from peptidyl-tRNA molecules trapped in stalled 50S ribosomal subunits, and thus maintains levels of free tRNAs and 50S ribosomes. The polypeptide is Peptidyl-tRNA hydrolase (Sorangium cellulosum (strain So ce56) (Polyangium cellulosum (strain So ce56))).